Consider the following 422-residue polypeptide: MTVKTTVSTKDIDEAFLRLKDIVKETPLQLDHYLSQKYDCKVYLKREDLQWVRSFKLRGAYNAISVLSDEAKSKGITCASAGNHAQGVAYTAKKLNLNAVIFMPVTTPLQKVNQVKFFGNSNVEVVLTGDTFDHCLAEALTYTSEHQMNFIDPFNNVHTISGQGTLAKEMLEQSKTDNVNFDYLFAAIGGGGLISGISTYFKTYSPTTKIIGVEPSGASSMYESVVVNNQVVTLPNIDKFVDGASVARVGDITFEIAKENVDDYVQVDEGAVCSTILDMYSKQAIVAEPAGALSVSALENYKDHIMGKTVVCVISGGNNDINRMKEIEERSLLYEEMKHYFILNFPQRPGALREFVNDVLGPQDDITKFEYLKKSSQNTGTVIIGIQLKDHDDLIQLKQRVNHFDPSNIYINENKMLYSLLI.

K56 carries the post-translational modification N6-(pyridoxal phosphate)lysine. Pyridoxal 5'-phosphate is bound by residues N83, G189–L193, and S315. An ACT-like domain is found at H339–E413.

The protein belongs to the serine/threonine dehydratase family. In terms of assembly, homotetramer. Pyridoxal 5'-phosphate serves as cofactor.

It carries out the reaction L-threonine = 2-oxobutanoate + NH4(+). It functions in the pathway amino-acid biosynthesis; L-isoleucine biosynthesis; 2-oxobutanoate from L-threonine: step 1/1. Its function is as follows. Catalyzes the anaerobic formation of alpha-ketobutyrate and ammonia from threonine in a two-step reaction. The first step involved a dehydration of threonine and a production of enamine intermediates (aminocrotonate), which tautomerizes to its imine form (iminobutyrate). Both intermediates are unstable and short-lived. The second step is the nonenzymatic hydrolysis of the enamine/imine intermediates to form 2-ketobutyrate and free ammonia. In the low water environment of the cell, the second step is accelerated by RidA. This Staphylococcus aureus (strain Mu50 / ATCC 700699) protein is L-threonine dehydratase biosynthetic IlvA (ilvA).